We begin with the raw amino-acid sequence, 307 residues long: Nicotinamide/nicotinic acid mononucleotide adenylyltransferase 2 (307 aa).

Residues Ser16 and Phe17 each contribute to the NAD(+) site. His24 provides a ligand contact to ATP. NAD(+)-binding residues include Trp92 and Thr95. 2 S-palmitoyl cysteine lipidation sites follow: Cys164 and Cys165. Residues Gly200, Asp202, Leu212, Trp213, and Arg232 each contribute to the NAD(+) site. 271–274 contacts ATP; the sequence is TKSR.

The protein belongs to the eukaryotic NMN adenylyltransferase family. Monomer. Mg(2+) serves as cofactor. Post-translationally, degraded in response to injured neurite. Degradation is caused by polyubiquitination by MYCBP2 after recognition by FBXO45. In terms of processing, palmitoylated; palmitoylation is required for membrane association.

It localises to the golgi apparatus membrane. The protein localises to the cytoplasmic vesicle membrane. The protein resides in the cytoplasm. Its subcellular location is the cell projection. It is found in the axon. The catalysed reaction is beta-nicotinamide D-ribonucleotide + ATP + H(+) = diphosphate + NAD(+). It catalyses the reaction nicotinate beta-D-ribonucleotide + ATP + H(+) = deamido-NAD(+) + diphosphate. It functions in the pathway cofactor biosynthesis; NAD(+) biosynthesis; NAD(+) from nicotinamide D-ribonucleotide: step 1/1. Its pathway is cofactor biosynthesis; NAD(+) biosynthesis; deamido-NAD(+) from nicotinate D-ribonucleotide: step 1/1. With respect to regulation, inhibited by P1-(adenosine-5')-P3-(nicotinamide-riboside-5')-triphosphate (Np3AD) and P1-(adenosine-5')-P4-(nicotinamide-riboside-5')-tetraphosphate (Np4AD). Nicotinamide/nicotinate-nucleotide adenylyltransferase that acts as an axon maintenance factor. Axon survival factor required for the maintenance of healthy axons: acts by delaying Wallerian axon degeneration, an evolutionarily conserved process that drives the loss of damaged axons. Catalyzes the formation of NAD(+) from nicotinamide mononucleotide (NMN) and ATP. Can also use the deamidated form; nicotinic acid mononucleotide (NaMN) as substrate but with a lower efficiency. Cannot use triazofurin monophosphate (TrMP) as substrate. Also catalyzes the reverse reaction, i.e. the pyrophosphorolytic cleavage of NAD(+). For the pyrophosphorolytic activity prefers NAD(+), NADH and NaAD as substrates and degrades nicotinic acid adenine dinucleotide phosphate (NHD) less effectively. Fails to cleave phosphorylated dinucleotides NADP(+), NADPH and NaADP(+). Also acts as an activator of ADP-ribosylation by supporting the catalytic activity of PARP16 and promoting mono-ADP-ribosylation of ribosomes by PARP16. May be involved in the maintenance of axonal integrity. The polypeptide is Nicotinamide/nicotinic acid mononucleotide adenylyltransferase 2 (Nmnat2) (Rattus norvegicus (Rat)).